The chain runs to 170 residues: MSKAAIAEKEKLVDAFAEELKAAKAILVINYLGLTVEEVTNMRKDLRDNDVKMKVIKNTYLRRAAAKAGIEGLDDTFVGPTAVIYTDNADDITEPARIVSKYEDDFDVIEIKGGMLEGKLTSKEEIKELASIPGREGLLSMLVSVLQAPVRDFAYAVKAVAESKDEDSAE.

It belongs to the universal ribosomal protein uL10 family. In terms of assembly, part of the ribosomal stalk of the 50S ribosomal subunit. The N-terminus interacts with L11 and the large rRNA to form the base of the stalk. The C-terminus forms an elongated spine to which L12 dimers bind in a sequential fashion forming a multimeric L10(L12)X complex.

In terms of biological role, forms part of the ribosomal stalk, playing a central role in the interaction of the ribosome with GTP-bound translation factors. This is Large ribosomal subunit protein uL10 from Lactobacillus acidophilus (strain ATCC 700396 / NCK56 / N2 / NCFM).